Here is a 238-residue protein sequence, read N- to C-terminus: Purine nucleoside phosphorylase DeoD-type (238 aa).

A purine D-ribonucleoside is bound at residue H4. Phosphate contacts are provided by residues G20, R24, R43, and R87–S90. A purine D-ribonucleoside contacts are provided by residues E179–E181 and S203–D204. D204 serves as the catalytic Proton donor.

The protein belongs to the PNP/UDP phosphorylase family. Homohexamer; trimer of homodimers.

The catalysed reaction is a purine D-ribonucleoside + phosphate = a purine nucleobase + alpha-D-ribose 1-phosphate. The enzyme catalyses a purine 2'-deoxy-D-ribonucleoside + phosphate = a purine nucleobase + 2-deoxy-alpha-D-ribose 1-phosphate. Catalyzes the reversible phosphorolytic breakdown of the N-glycosidic bond in the beta-(deoxy)ribonucleoside molecules, with the formation of the corresponding free purine bases and pentose-1-phosphate. The chain is Purine nucleoside phosphorylase DeoD-type from Histophilus somni (strain 129Pt) (Haemophilus somnus).